A 178-amino-acid polypeptide reads, in one-letter code: Crossover junction endodeoxyribonuclease RuvC (178 aa).

Catalysis depends on residues Asp11, Glu71, and Asp143. Positions 11, 71, and 143 each coordinate Mg(2+).

Belongs to the RuvC family. In terms of assembly, homodimer which binds Holliday junction (HJ) DNA. The HJ becomes 2-fold symmetrical on binding to RuvC with unstacked arms; it has a different conformation from HJ DNA in complex with RuvA. In the full resolvosome a probable DNA-RuvA(4)-RuvB(12)-RuvC(2) complex forms which resolves the HJ. The cofactor is Mg(2+).

It localises to the cytoplasm. It catalyses the reaction Endonucleolytic cleavage at a junction such as a reciprocal single-stranded crossover between two homologous DNA duplexes (Holliday junction).. The RuvA-RuvB-RuvC complex processes Holliday junction (HJ) DNA during genetic recombination and DNA repair. Endonuclease that resolves HJ intermediates. Cleaves cruciform DNA by making single-stranded nicks across the HJ at symmetrical positions within the homologous arms, yielding a 5'-phosphate and a 3'-hydroxyl group; requires a central core of homology in the junction. The consensus cleavage sequence is 5'-(A/T)TT(C/G)-3'. Cleavage occurs on the 3'-side of the TT dinucleotide at the point of strand exchange. HJ branch migration catalyzed by RuvA-RuvB allows RuvC to scan DNA until it finds its consensus sequence, where it cleaves and resolves the cruciform DNA. In Neisseria meningitidis serogroup A / serotype 4A (strain DSM 15465 / Z2491), this protein is Crossover junction endodeoxyribonuclease RuvC.